The sequence spans 201 residues: Superoxide dismutase [Fe] (201 aa).

The Fe cation site is built by His-27, His-79, Asp-161, and His-165.

Belongs to the iron/manganese superoxide dismutase family. In terms of assembly, homodimer. Requires Fe cation as cofactor.

It carries out the reaction 2 superoxide + 2 H(+) = H2O2 + O2. Its function is as follows. Destroys superoxide anion radicals which are normally produced within the cells and which are toxic to biological systems. The polypeptide is Superoxide dismutase [Fe] (sodB) (Synechococcus elongatus (strain ATCC 33912 / PCC 7942 / FACHB-805) (Anacystis nidulans R2)).